Here is a 472-residue protein sequence, read N- to C-terminus: Coenzyme F(430) synthetase (472 aa).

119-125 (GVKAKTS) is an ATP binding site.

The protein belongs to the MurCDEF family.

The catalysed reaction is 15,17(3)-seco-F430-17(3)-acid + ATP = coenzyme F430 + ADP + phosphate. Its function is as follows. Involved in the biosynthesis of the unique nickel-containing tetrapyrrole coenzyme F430, the prosthetic group of methyl-coenzyme M reductase (MCR), which plays a key role in methanogenesis and anaerobic methane oxidation. Catalyzes the activation the g-propionate side chain of 15,17(3)-seco-F430-17(3)-acid (seco-F430) for intramolecular C-C bond formation to yield the carbocyclic F ring of coenzyme F430. The protein is Coenzyme F(430) synthetase of Methanosarcina acetivorans (strain ATCC 35395 / DSM 2834 / JCM 12185 / C2A).